A 575-amino-acid polypeptide reads, in one-letter code: Hemagglutinin-neuraminidase (575 aa).

A compositionally biased stretch (basic and acidic residues) spans 1-10; that stretch reads MDGDRGKRDS. A disordered region spans residues 1 to 24; it reads MDGDRGKRDSYWSTSPSGSTTKLA. Residues 1–37 are Intravirion-facing; sequence MDGDRGKRDSYWSTSPSGSTTKLASGWERSSKVDTWL. An incorporation in virion region spans residues 10-14; it reads SYWST. Residues 11–23 show a composition bias toward polar residues; that stretch reads YWSTSPSGSTTKL. Residues 38–58 traverse the membrane as a helical segment; that stretch reads LILSFTQWALSIATVIICIII. An involved in interaction with F protein region spans residues 59-140; it reads SARQGYSMKE…RQELTQLCES (82 aa). Over 59–575 the chain is Virion surface; the sequence is SARQGYSMKE…SIPKLCKAES (517 aa). Asparagine 77 carries an N-linked (GlcNAc...) asparagine; by host glycan. Cystine bridges form between cysteine 192/cysteine 216, cysteine 258/cysteine 271, cysteine 357/cysteine 469, and cysteine 463/cysteine 473. The segment at 254 to 259 is involved in neuraminidase activity; sequence NRKSCS. N-linked (GlcNAc...) asparagine; by host glycans are attached at residues asparagine 499 and asparagine 511. An intrachain disulfide couples cysteine 535 to cysteine 544.

It belongs to the paramyxoviruses hemagglutinin-neuraminidase family. As to quaternary structure, homotetramer; composed of disulfide-linked homodimers. Interacts with F protein trimer. In terms of processing, N-glycosylated; glycans consist of a mixture of high mannose-type oligosaccharides and of complex-type oligosaccharides.

It localises to the virion membrane. It is found in the host cell membrane. It carries out the reaction Hydrolysis of alpha-(2-&gt;3)-, alpha-(2-&gt;6)-, alpha-(2-&gt;8)- glycosidic linkages of terminal sialic acid residues in oligosaccharides, glycoproteins, glycolipids, colominic acid and synthetic substrates.. Attaches the virus to sialic acid-containing cell receptors and thereby initiating infection. Binding of HN protein to the receptor induces a conformational change that allows the F protein to trigger virion/cell membranes fusion. In terms of biological role, neuraminidase activity ensures the efficient spread of the virus by dissociating the mature virions from the neuraminic acid containing glycoproteins. This Sendai virus (strain Fushimi) (SeV) protein is Hemagglutinin-neuraminidase (HN).